An 85-amino-acid chain; its full sequence is Putative membrane protein insertion efficiency factor (85 aa).

Residues 62-85 (KGGFDPVPLKKDKSASKHSHKHNH) form a disordered region.

The protein belongs to the UPF0161 family.

It is found in the cell membrane. Functionally, could be involved in insertion of integral membrane proteins into the membrane. The chain is Putative membrane protein insertion efficiency factor from Staphylococcus aureus (strain Mu3 / ATCC 700698).